Reading from the N-terminus, the 410-residue chain is Tryptophan synthase beta chain (410 aa).

K99 is modified (N6-(pyridoxal phosphate)lysine).

It belongs to the TrpB family. As to quaternary structure, tetramer of two alpha and two beta chains. Pyridoxal 5'-phosphate serves as cofactor.

It carries out the reaction (1S,2R)-1-C-(indol-3-yl)glycerol 3-phosphate + L-serine = D-glyceraldehyde 3-phosphate + L-tryptophan + H2O. It participates in amino-acid biosynthesis; L-tryptophan biosynthesis; L-tryptophan from chorismate: step 5/5. Its function is as follows. The beta subunit is responsible for the synthesis of L-tryptophan from indole and L-serine. This Pseudomonas fluorescens (strain Pf0-1) protein is Tryptophan synthase beta chain.